Reading from the N-terminus, the 362-residue chain is P2Y purinoceptor 1 (362 aa).

Over 1–40 the chain is Extracellular; the sequence is MTEALISAALNGTQPELLAGGWAAGNASTKCSLTKTGFQF. Asn-11 and Asn-26 each carry an N-linked (GlcNAc...) asparagine glycan. Intrachain disulfides connect Cys-31-Cys-285 and Cys-113-Cys-191. Lys-35 is a binding site for ADP. Residues 41 to 63 traverse the membrane as a helical segment; it reads YYLPTVYILVFITGFLGNSVAIW. Residues 64–76 lie on the Cytoplasmic side of the membrane; that stretch reads MFVFHMRPWSGIS. Residues 77 to 98 form a helical membrane-spanning segment; that stretch reads VYMFNLALADFLYVLTLPALIF. The Extracellular segment spans residues 99 to 114; sequence YYFNKTDWIFGDVMCK. The N-linked (GlcNAc...) asparagine glycan is linked to Asn-102. The chain crosses the membrane as a helical span at residues 115-136; sequence LQRFIFHVNLYGSILFLTCISV. Over 137 to 155 the chain is Cytoplasmic; the sequence is HRYTGVVHPLKSLGRLKKK. Residues 156–177 traverse the membrane as a helical segment; sequence NAVYVSSLVWALVVAVIAPILF. The Extracellular portion of the chain corresponds to 178-203; the sequence is YSGTGVRRNKTITCYDTTADEYLRSY. A glycan (N-linked (GlcNAc...) asparagine) is linked at Asn-186. An ADP-binding site is contributed by 192–194; the sequence is YDT. The helical transmembrane segment at 204–226 threads the bilayer; sequence FVYSMCTTVFMFCIPFIVILGCY. Over 227–249 the chain is Cytoplasmic; sequence GLIVKALIYKDLDNSPLRRKSIY. The chain crosses the membrane as a helical span at residues 250-273; it reads LVIIVLTVFAVSYLPFHVMKTLNL. Residues 272–276, 292–295, and Arg-299 contribute to the ADP site; these read NLRAR and YATY. The Extracellular segment spans residues 274 to 292; sequence RARLDFQTPQMCAFNDKVY. Residues 293-314 traverse the membrane as a helical segment; it reads ATYQVTRGLASLNSCVDPILYF. At 315–362 the chain is on the cytoplasmic side; the sequence is LAGDTFRRRLSRATRKSSRRSEPNVQSKSEEMTLNILTEYKQNGDTSL.

Belongs to the G-protein coupled receptor 1 family. In terms of tissue distribution, mainly found in blood, brain, and lung. To a lesser extent in stomach, gut and skeletal muscle.

The protein localises to the cell membrane. Its function is as follows. Receptor for extracellular adenine nucleotides such as ADP. In platelets, binding to ADP leads to mobilization of intracellular calcium ions via activation of phospholipase C, a change in platelet shape, and ultimately platelet aggregation. The polypeptide is P2Y purinoceptor 1 (P2RY1) (Meleagris gallopavo (Wild turkey)).